Consider the following 558-residue polypeptide: Atlastin-1 (558 aa).

Positions 1-28 (MAKNRRDRNSWGGFSEKTYEWSSEEEEP) are disordered. The segment at 1–34 (MAKNRRDRNSWGGFSEKTYEWSSEEEEPVKKAGP) is N-terminal hypervariable region (HVR). The Cytoplasmic segment spans residues 1–449 (MAKNRRDRNS…NIFHAARTPA (449 aa)). Residues Ser10, Ser22, and Ser23 each carry the phosphoserine modification. Residues 64–309 (DKEVVAVSVA…LIPWLLSPES (246 aa)) form the GB1/RHD3-type G domain. GDP-binding residues include Arg77, Lys78, Gly79, Lys80, Ser81, Phe82, Gln148, Arg217, Asp218, Val276, and Asn279. Residues Arg77, Lys78, Gly79, Lys80, Ser81, and Phe82 each contribute to the GTP site. Ser81 is a Mg(2+) binding site. The GTP site is built by Arg217, Asp218, and Val276. The segment at 347–438 (MLQATAEANN…YIQYIKHNDS (92 aa)) is 3HB (three-helix bundle) domain. Lys395 bears the N6-acetyllysine mark. The stretch at 418-439 (LQQLETEIDELYIQYIKHNDSK) forms a coiled coil. The tract at residues 439–447 (KNIFHAART) is linker. The helical transmembrane segment at 450-470 (TLFVVIFITYVIAGVTGFIGL) threads the bilayer. Position 471 (Asp471) is a topological domain, lumenal. Residues 472–492 (IIASLCNMIMGLTLITLCTWA) traverse the membrane as a helical segment. The Cytoplasmic portion of the chain corresponds to 493-558 (YIRYSGEYRE…STEQSEKKKM (66 aa)). The autoinhibitory domain stretch occupies residues 521–558 (NEALYKLYSAAATHRHLYHQAFPAPKSESTEQSEKKKM).

This sequence belongs to the TRAFAC class dynamin-like GTPase superfamily. GB1/RHD3 GTPase family. GB1 subfamily. In terms of assembly, monomeric and homodimeric. The homodimer, transiently formed by two molecules on opposing membranes, is the active form mediating ER membrane fusion. Interacts with REEP1, REEP5, RTN3 and RTN4 (via the transmembrane region); these proteins are involved in endoplasmic reticulum tubular network organization. Interacts with ZFYVE27; both proteins are involved in endoplasmic reticulum tubular network organization. Interacts with ARL6IP1; both proteins are involved in endoplasmic reticulum tubular network organization. Interacts with SPAST; the interaction is direct, could recruit SPAST to Golgi membranes. Interacts (via N-terminal region) with MAP4K4 (via CNH regulatory domain). May interact with TMED2. Interacts with CPT1C. Post-translationally, phosphorylated. Phosphorylation, by different kinases, of the N-terminal hypervariable region (HVR) regulates the ATL1-mediated membrane tethering step.

It localises to the endoplasmic reticulum membrane. The protein localises to the golgi apparatus membrane. Its subcellular location is the cell projection. It is found in the axon. The enzyme catalyses GTP + H2O = GDP + phosphate + H(+). In terms of biological role, atlastin-1 (ATL1) is a membrane-anchored GTPase that mediates the GTP-dependent fusion of endoplasmic reticulum (ER) membranes, maintaining the continuous ER network. It facilitates the formation of three-way junctions where ER tubules intersect. Two atlastin-1 on neighboring ER tubules bind GTP and form loose homodimers through the GB1/RHD3-type G domains and 3HB regions. Upon GTP hydrolysis, the 3HB regions tighten, pulling the membranes together to drive their fusion. After fusion, the homodimer disassembles upon release of inorganic phosphate (Pi). Subsequently, GDP dissociates, resetting the monomers to a conformation ready for a new fusion cycle. May also regulate more or less directly Golgi biogenesis. Indirectly regulates axonal development. This chain is Atlastin-1, found in Bos taurus (Bovine).